A 257-amino-acid polypeptide reads, in one-letter code: MLSIVASPPVISAVSLSKPLQSLAKAALSLSKRAKPTSPFPKTARSISVYKSPMNNLFTRLGFGSRPQPDPAASSAIAQGPDDDVPSPGQQFAQFGAGCFWGAELAYQRVPGVTKTEVGYSHGFVDNPTYEDVCSETTGHNEIVRVQYDPKEVSFESLLDVFWKRHDPTTLNRQGNDVGTRYRSGIYFYTDEQEKLAREAMEKQQKILNRKIVTEILPATKFYRAENYHQQYLAKGGRMGLSQSAEKGCNDPIRCYG.

Positions 61–88 are disordered; that stretch reads LGFGSRPQPDPAASSAIAQGPDDDVPSP. Ser244 is modified (phosphoserine).

Belongs to the MsrA Met sulfoxide reductase family.

It catalyses the reaction L-methionyl-[protein] + [thioredoxin]-disulfide + H2O = L-methionyl-(S)-S-oxide-[protein] + [thioredoxin]-dithiol. It carries out the reaction [thioredoxin]-disulfide + L-methionine + H2O = L-methionine (S)-S-oxide + [thioredoxin]-dithiol. Its function is as follows. Has an important function as a repair enzyme for proteins that have been inactivated by oxidation. Catalyzes the reversible oxidation-reduction of methionine sulfoxide in proteins to methionine. This is Peptide methionine sulfoxide reductase (PMSR) from Brassica napus (Rape).